Consider the following 385-residue polypeptide: Lipid-A-disaccharide synthase 2 (385 aa).

It belongs to the LpxB family.

The catalysed reaction is a lipid X + a UDP-2-N,3-O-bis[(3R)-3-hydroxyacyl]-alpha-D-glucosamine = a lipid A disaccharide + UDP + H(+). It participates in bacterial outer membrane biogenesis; LPS lipid A biosynthesis. Its function is as follows. Condensation of UDP-2,3-diacylglucosamine and 2,3-diacylglucosamine-1-phosphate to form lipid A disaccharide, a precursor of lipid A, a phosphorylated glycolipid that anchors the lipopolysaccharide to the outer membrane of the cell. The sequence is that of Lipid-A-disaccharide synthase 2 from Legionella pneumophila subsp. pneumophila (strain Philadelphia 1 / ATCC 33152 / DSM 7513).